The chain runs to 492 residues: Glutamyl-tRNA(Gln) amidotransferase subunit A (492 aa).

Active-site charge relay system residues include lysine 78 and serine 158. The active-site Acyl-ester intermediate is serine 182.

Belongs to the amidase family. GatA subfamily. As to quaternary structure, heterotrimer of A, B and C subunits.

It catalyses the reaction L-glutamyl-tRNA(Gln) + L-glutamine + ATP + H2O = L-glutaminyl-tRNA(Gln) + L-glutamate + ADP + phosphate + H(+). Allows the formation of correctly charged Gln-tRNA(Gln) through the transamidation of misacylated Glu-tRNA(Gln) in organisms which lack glutaminyl-tRNA synthetase. The reaction takes place in the presence of glutamine and ATP through an activated gamma-phospho-Glu-tRNA(Gln). This chain is Glutamyl-tRNA(Gln) amidotransferase subunit A, found in Rhodopseudomonas palustris (strain HaA2).